The chain runs to 401 residues: Beta-ketoadipyl-CoA thiolase (401 aa).

The active-site Acyl-thioester intermediate is C91. Catalysis depends on proton acceptor residues H357 and C387.

This sequence belongs to the thiolase-like superfamily. Thiolase family.

The catalysed reaction is succinyl-CoA + acetyl-CoA = 3-oxoadipyl-CoA + CoA. The protein operates within aromatic compound metabolism; beta-ketoadipate pathway; acetyl-CoA and succinyl-CoA from 3-oxoadipate: step 2/2. In terms of biological role, catalyzes thiolytic cleavage of beta-ketoadipyl-CoA to succinyl-CoA and acetyl-CoA. The protein is Beta-ketoadipyl-CoA thiolase (pcaF) of Pseudomonas aeruginosa (strain ATCC 15692 / DSM 22644 / CIP 104116 / JCM 14847 / LMG 12228 / 1C / PRS 101 / PAO1).